The primary structure comprises 92 residues: Small ribosomal subunit protein bS18 (92 aa).

The protein belongs to the bacterial ribosomal protein bS18 family. Part of the 30S ribosomal subunit. Forms a tight heterodimer with protein bS6.

In terms of biological role, binds as a heterodimer with protein bS6 to the central domain of the 16S rRNA, where it helps stabilize the platform of the 30S subunit. In Caulobacter sp. (strain K31), this protein is Small ribosomal subunit protein bS18.